A 115-amino-acid chain; its full sequence is uncharacterized protein (115 aa).

The disordered stretch occupies residues 9 to 30 (EGLRERGASGKNEQKKKKKEKI).

This is an uncharacterized protein from Saccharomyces cerevisiae (strain ATCC 204508 / S288c) (Baker's yeast).